Reading from the N-terminus, the 274-residue chain is MTHQTHAYHMVNPSPWPLTGALSALLMTSGLAMWFHFNSSMLLSLGMLTNLLTMYQWWRDIVREGTFQGHHTSIVQKGLRYGMVLFIISEIFFFAGFFWAFYHSSLAPTPELGGCWPPTGIHPLNPLEVPLLNTAVLLASGVSITWAHHSLMEGNRVQMLQALLITITLGLYFTLLQASEYFETSFTISDGVYGSTFFMATGFHGLHVIIGSTFLTVCFFRQLSFHFTSNHHFGFEAAAWYWHFVDVVWLFLYVSIYWWGSYSFSIDPMQLTSN.

The Mitochondrial matrix segment spans residues 1-15 (MTHQTHAYHMVNPSP). A helical membrane pass occupies residues 16-34 (WPLTGALSALLMTSGLAMW). Over 35–40 (FHFNSS) the chain is Mitochondrial intermembrane. The chain crosses the membrane as a helical span at residues 41–66 (MLLSLGMLTNLLTMYQWWRDIVREGT). Residues 67-72 (FQGHHT) lie on the Mitochondrial matrix side of the membrane. Residues 73–105 (SIVQKGLRYGMVLFIISEIFFFAGFFWAFYHSS) form a helical membrane-spanning segment. The Mitochondrial intermembrane portion of the chain corresponds to 106–128 (LAPTPELGGCWPPTGIHPLNPLE). A helical membrane pass occupies residues 129-152 (VPLLNTAVLLASGVSITWAHHSLM). The Mitochondrial matrix segment spans residues 153-155 (EGN). A helical transmembrane segment spans residues 156–183 (RVQMLQALLITITLGLYFTLLQASEYFE). Topologically, residues 184-190 (TSFTISD) are mitochondrial intermembrane. Residues 191–223 (GVYGSTFFMATGFHGLHVIIGSTFLTVCFFRQL) traverse the membrane as a helical segment. Over 224-232 (SFHFTSNHH) the chain is Mitochondrial matrix. The helical transmembrane segment at 233 to 256 (FGFEAAAWYWHFVDVVWLFLYVSI) threads the bilayer. Over 257-274 (YWWGSYSFSIDPMQLTSN) the chain is Mitochondrial intermembrane.

The protein belongs to the cytochrome c oxidase subunit 3 family. In terms of assembly, component of the cytochrome c oxidase (complex IV, CIV), a multisubunit enzyme composed of 14 subunits. The complex is composed of a catalytic core of 3 subunits MT-CO1, MT-CO2 and MT-CO3, encoded in the mitochondrial DNA, and 11 supernumerary subunits COX4I, COX5A, COX5B, COX6A, COX6B, COX6C, COX7A, COX7B, COX7C, COX8 and NDUFA4, which are encoded in the nuclear genome. The complex exists as a monomer or a dimer and forms supercomplexes (SCs) in the inner mitochondrial membrane with NADH-ubiquinone oxidoreductase (complex I, CI) and ubiquinol-cytochrome c oxidoreductase (cytochrome b-c1 complex, complex III, CIII), resulting in different assemblies (supercomplex SCI(1)III(2)IV(1) and megacomplex MCI(2)III(2)IV(2)).

The protein localises to the mitochondrion inner membrane. The catalysed reaction is 4 Fe(II)-[cytochrome c] + O2 + 8 H(+)(in) = 4 Fe(III)-[cytochrome c] + 2 H2O + 4 H(+)(out). In terms of biological role, component of the cytochrome c oxidase, the last enzyme in the mitochondrial electron transport chain which drives oxidative phosphorylation. The respiratory chain contains 3 multisubunit complexes succinate dehydrogenase (complex II, CII), ubiquinol-cytochrome c oxidoreductase (cytochrome b-c1 complex, complex III, CIII) and cytochrome c oxidase (complex IV, CIV), that cooperate to transfer electrons derived from NADH and succinate to molecular oxygen, creating an electrochemical gradient over the inner membrane that drives transmembrane transport and the ATP synthase. Cytochrome c oxidase is the component of the respiratory chain that catalyzes the reduction of oxygen to water. Electrons originating from reduced cytochrome c in the intermembrane space (IMS) are transferred via the dinuclear copper A center (CU(A)) of subunit 2 and heme A of subunit 1 to the active site in subunit 1, a binuclear center (BNC) formed by heme A3 and copper B (CU(B)). The BNC reduces molecular oxygen to 2 water molecules using 4 electrons from cytochrome c in the IMS and 4 protons from the mitochondrial matrix. This chain is Cytochrome c oxidase subunit 3 (MT-CO3), found in Lemur catta (Ring-tailed lemur).